The following is a 250-amino-acid chain: MKHSHVLLLLFVQVIVLLPLLCLSDDFVNSRATYYGSPDCKANPRGHCGYGEFGRDINNGEVSGVSWRLWNNGTGCGACYQVRCKIPPHCSEEGVYVVATDSGEGDGTDFILSPKAYGRMARPGTENQLYSFGVVNVEYQRIPCRYAGYNLVYKIHEKSYNPHYLAILVLYVGGVNDILAVEVWQEDCKEWRRMRRVFGAVHDLQNPPRGTLTLRFLVYGSAGINWIQSPNAIPADWTAGATYDSNILLT.

A signal peptide spans 1 to 24 (MKHSHVLLLLFVQVIVLLPLLCLS). Residues 45–149 (RGHCGYGEFG…QRIPCRYAGY (105 aa)) form the Expansin-like EG45 domain. N-linked (GlcNAc...) asparagine glycosylation is present at N72. Residues 163–245 (HYLAILVLYV…DWTAGATYDS (83 aa)) form the Expansin-like CBD domain.

It belongs to the expansin family. Expansin-like B subfamily.

It localises to the secreted. The sequence is that of Expansin-like B1 (EXLB1) from Arabidopsis thaliana (Mouse-ear cress).